A 231-amino-acid polypeptide reads, in one-letter code: MSALCPLLTPPASEALLLAQARQLSGYTLGELAAMAGITTPKDLKRDKGWIGVLLEIWLGASAGSKPEQDFAALGVELKTIPVDSLGRPLETTFVCVAPLTGNSGVTWETSHVRHKLKRVLWVPVEGDRSIPLAERRVGSPLLWSPSEEEDRQLRLDWEELMDMIVLGQVERITARHGEVLQLRPKAANSRALTEAIGARGEPILTLPRGFYLKKNFTQALLARHFLLQNP.

Belongs to the MutH family.

Its subcellular location is the cytoplasm. In terms of biological role, sequence-specific endonuclease that cleaves unmethylated GATC sequences. It is involved in DNA mismatch repair. This Salmonella paratyphi C (strain RKS4594) protein is DNA mismatch repair protein MutH.